Reading from the N-terminus, the 160-residue chain is Serine-protein kinase RsbW (160 aa).

It belongs to the anti-sigma-factor family.

It catalyses the reaction L-seryl-[protein] + ATP = O-phospho-L-seryl-[protein] + ADP + H(+). The catalysed reaction is L-threonyl-[protein] + ATP = O-phospho-L-threonyl-[protein] + ADP + H(+). Negative regulator of sigma-B activity. Phosphorylates and inactivates its specific antagonist protein, RsbV. Upon phosphorylation of RsbV, RsbW is released and binds to sigma-B, thereby blocking its ability to form an RNA polymerase holoenzyme (E-sigma-B). In Bacillus cereus (strain ATCC 10987 / NRS 248), this protein is Serine-protein kinase RsbW.